A 514-amino-acid chain; its full sequence is Maturase K (514 aa).

The protein belongs to the intron maturase 2 family. MatK subfamily.

Its subcellular location is the plastid. The protein resides in the chloroplast. Usually encoded in the trnK tRNA gene intron. Probably assists in splicing its own and other chloroplast group II introns. The polypeptide is Maturase K (Zamia integrifolia (Coontie)).